We begin with the raw amino-acid sequence, 191 residues long: Large ribosomal subunit protein uL29m (191 aa).

The protein belongs to the universal ribosomal protein uL29 family. As to quaternary structure, component of the mitochondrial large ribosomal subunit. Mature mitochondrial ribosomes consist of a small (37S) and a large (54S) subunit. The 37S subunit contains at least 33 different proteins and 1 molecule of RNA (15S). The 54S subunit contains at least 45 different proteins and 1 molecule of RNA (21S).

It localises to the mitochondrion. This chain is Large ribosomal subunit protein uL29m (MRPL4), found in Sclerotinia sclerotiorum (strain ATCC 18683 / 1980 / Ss-1) (White mold).